Consider the following 639-residue polypeptide: Chaperone protein DnaK (639 aa).

Position 198 is a phosphothreonine; by autocatalysis (threonine 198). The segment at 597-639 (AYSAGQSAEGAPHAAGAEASAQSRTDDGVVDADFEEVDEKKGH) is disordered. Over residues 603-617 (SAEGAPHAAGAEASA) the composition is skewed to low complexity. The span at 624-633 (GVVDADFEEV) shows a compositional bias: acidic residues.

It belongs to the heat shock protein 70 family.

In terms of biological role, acts as a chaperone. In Rhodospirillum rubrum (strain ATCC 11170 / ATH 1.1.1 / DSM 467 / LMG 4362 / NCIMB 8255 / S1), this protein is Chaperone protein DnaK.